Here is a 164-residue protein sequence, read N- to C-terminus: Reticulon-like protein B22 (164 aa).

Positions 1–164 (MGEMGKAMGL…ILEQEAHSDT (164 aa)) constitute a Reticulon domain. The next 2 helical transmembrane spans lie at 30–50 (SLFS…GLLF) and 117–137 (LISG…SMLC).

It localises to the endoplasmic reticulum membrane. The chain is Reticulon-like protein B22 (RTNLB22) from Arabidopsis thaliana (Mouse-ear cress).